We begin with the raw amino-acid sequence, 148 residues long: Probable glucosamine 6-phosphate N-acetyltransferase (148 aa).

The N-acetyltransferase domain maps to 3–148; the sequence is ISINELNFDD…KQMALYLNGK (146 aa). Substrate contacts are provided by residues Thr25, 72 to 75, and 84 to 86; these read KFIH and EDV. Acetyl-CoA contacts are provided by residues 86–88 and 94–99; these read VVV and LHGIGK. Residues 115–116 and Asp120 each bind substrate; that span reads YK. 129-131 provides a ligand contact to acetyl-CoA; it reads YCK. Glu138 is a substrate binding site.

Belongs to the acetyltransferase family. GNA1 subfamily.

The enzyme catalyses D-glucosamine 6-phosphate + acetyl-CoA = N-acetyl-D-glucosamine 6-phosphate + CoA + H(+). It functions in the pathway nucleotide-sugar biosynthesis; UDP-N-acetyl-alpha-D-glucosamine biosynthesis; N-acetyl-alpha-D-glucosamine 1-phosphate from alpha-D-glucosamine 6-phosphate (route I): step 1/2. The polypeptide is Probable glucosamine 6-phosphate N-acetyltransferase (Acanthamoeba polyphaga (Amoeba)).